The primary structure comprises 527 residues: MDWQQLWLAFLLPMTVSGRALGPTEKEAVLDYLLQYGYLQKPLEGADDFRLEDITEALRTFQEASGLPISGQMDDATRARMKQPRCGLEDPFNQKSLKYLLLGHWRKKNLTFRIFNVPSTLSLPRVRAALHQAFKYWSSVAPLTFREVKAGWADIRLSFHGRQSLYCSNTFDGPGKVLAHADIPELGSIHFDKDELWTEGTYQGVNLRIIAAHEVGHALGLGHSRYTQALMAPVYAGYQPFFKLHPDDVAGIQALYGKRSPETRDEEEETEMLTVSPVTAKPGPMPNPCSGEVDAMVLGPRGKTYAFKGDYVWTVTDSGPGPLFQISALWEGLPGNLDAAVYSPRTRRTHFFKGNKVWRYVDFKMSPGFPMKFNRVEPNLDAALYWPVNQKVFLFKGSGYWQWDELARTDLSRYPKPIKELFTGVPDRPSAAMSWQDGQVYFFKGKEYWRLNQQLRVAKGYPRNTTHWMHCGSQTPDTNSSTGDVTPSTTDTVLGTTPSTMGSTLDIPSATDSASLSFSANVTLLGA.

The N-terminal stretch at 1 to 18 (MDWQQLWLAFLLPMTVSG) is a signal peptide. Residues 19 to 98 (RALGPTEKEA…EDPFNQKSLK (80 aa)) constitute a propeptide that is removed on maturation. A Cysteine switch motif is present at residues 84 to 91 (PRCGLEDP). Zn(2+) is bound at residue Cys86. N-linked (GlcNAc...) asparagine glycosylation occurs at Asn109. Residue His213 coordinates Zn(2+). Glu214 is a catalytic residue. Residues His217 and His223 each contribute to the Zn(2+) site. 4 Hemopexin repeats span residues 286-333 (PNPC…WEGL), 334-372 (PGNL…FPMK), 377-425 (EPNL…FTGV), and 426-471 (PDRP…WMHC). Cys289 and Cys471 are disulfide-bonded. N-linked (GlcNAc...) asparagine glycans are attached at residues Asn464 and Asn479. Positions 473–500 (SQTPDTNSSTGDVTPSTTDTVLGTTPST) are disordered. The GPI-anchor amidated aspartate moiety is linked to residue Asp512. Positions 513–527 (SASLSFSANVTLLGA) are cleaved as a propeptide — removed in mature form. Residue Asn521 is glycosylated (N-linked (GlcNAc...) asparagine).

Belongs to the peptidase M10A family. Requires Zn(2+) as cofactor. Ca(2+) is required as a cofactor. In terms of processing, activated by autolytic cleavage after Lys-98. Post-translationally, tyrosine phosphorylated by PKDCC/VLK. As to expression, highly expressed in the liver. Expressed in the arterial tunica media of large blood vessels.

Its subcellular location is the cell membrane. It localises to the secreted. The protein localises to the extracellular space. The protein resides in the extracellular matrix. Endopeptidase that degrades various components of the extracellular matrix, such as aggrecan and cartilage oligomeric matrix protein (comp), during development, haemostasis and pathological conditions (arthritic disease). May also play a role in neovascularization or angiogenesis. Hydrolyzes collagen type IV, laminin, nidogen, nascin-C isoform, fibronectin, and type I gelatin. The protein is Matrix metalloproteinase-19 (Mmp19) of Mus musculus (Mouse).